A 199-amino-acid chain; its full sequence is DnaJ homolog subfamily C member 5B (199 aa).

Ser-14 is modified (phosphoserine). One can recognise a J domain in the interval 19–84 (ALYEILGLHK…SKRSIYDKYG (66 aa)).

In terms of assembly, interacts with the chaperone complex consisting of HSC70 and SGTA. Post-translationally, palmitoylated. Palmitoylation is not required for membrane association. In terms of tissue distribution, testis specific.

The protein resides in the membrane. The sequence is that of DnaJ homolog subfamily C member 5B (DNAJC5B) from Homo sapiens (Human).